The chain runs to 194 residues: Holliday junction branch migration complex subunit RuvA (194 aa).

The interval methionine 1–leucine 63 is domain I. The segment at aspartate 64–valine 142 is domain II. The flexible linker stretch occupies residues serine 143 to leucine 147. Positions leucine 147–aspartate 194 are domain III.

It belongs to the RuvA family. As to quaternary structure, homotetramer. Forms an RuvA(8)-RuvB(12)-Holliday junction (HJ) complex. HJ DNA is sandwiched between 2 RuvA tetramers; dsDNA enters through RuvA and exits via RuvB. An RuvB hexamer assembles on each DNA strand where it exits the tetramer. Each RuvB hexamer is contacted by two RuvA subunits (via domain III) on 2 adjacent RuvB subunits; this complex drives branch migration. In the full resolvosome a probable DNA-RuvA(4)-RuvB(12)-RuvC(2) complex forms which resolves the HJ.

It localises to the cytoplasm. In terms of biological role, the RuvA-RuvB-RuvC complex processes Holliday junction (HJ) DNA during genetic recombination and DNA repair, while the RuvA-RuvB complex plays an important role in the rescue of blocked DNA replication forks via replication fork reversal (RFR). RuvA specifically binds to HJ cruciform DNA, conferring on it an open structure. The RuvB hexamer acts as an ATP-dependent pump, pulling dsDNA into and through the RuvAB complex. HJ branch migration allows RuvC to scan DNA until it finds its consensus sequence, where it cleaves and resolves the cruciform DNA. The sequence is that of Holliday junction branch migration complex subunit RuvA from Fusobacterium nucleatum subsp. nucleatum (strain ATCC 25586 / DSM 15643 / BCRC 10681 / CIP 101130 / JCM 8532 / KCTC 2640 / LMG 13131 / VPI 4355).